The chain runs to 586 residues: CTP synthase 2 (586 aa).

In terms of domain architecture, Glutamine amidotransferase type-1 spans 300-554 (SIALVGKYTK…LAATGNLNAY (255 aa)). Active-site for GATase activity residues include Cys399, His526, and Glu528. Positions 564–586 (SDRYSDASDDSFSEPRLAELEIS) are disordered. Ser568, Ser571, and Ser574 each carry phosphoserine.

It belongs to the CTP synthase family.

The catalysed reaction is UTP + L-glutamine + ATP + H2O = CTP + L-glutamate + ADP + phosphate + 2 H(+). The protein operates within pyrimidine metabolism; CTP biosynthesis via de novo pathway; CTP from UDP: step 2/2. In terms of biological role, catalyzes the ATP-dependent amination of UTP to CTP with either L-glutamine or ammonia as the source of nitrogen. Constitutes the rate-limiting enzyme in the synthesis of cytosine nucleotides. The chain is CTP synthase 2 (CTPS2) from Bos taurus (Bovine).